Consider the following 473-residue polypeptide: Argininosuccinate lyase (473 aa).

The protein belongs to the lyase 1 family. Argininosuccinate lyase subfamily.

It localises to the cytoplasm. The catalysed reaction is 2-(N(omega)-L-arginino)succinate = fumarate + L-arginine. It functions in the pathway amino-acid biosynthesis; L-arginine biosynthesis; L-arginine from L-ornithine and carbamoyl phosphate: step 3/3. This is Argininosuccinate lyase from Bordetella pertussis (strain Tohama I / ATCC BAA-589 / NCTC 13251).